A 487-amino-acid chain; its full sequence is GTPase Der (487 aa).

The tract at residues 1–20 is disordered; it reads MAKAVRKSNSEETVPIKAPR. EngA-type G domains follow at residues 28 to 197 and 225 to 401; these read PVVS…SSKP and FRLA…SRSR. Residues 34 to 41, 83 to 87, 149 to 152, 231 to 238, 278 to 282, and 343 to 346 each bind GTP; these read GRQNVGKS, DTPGL, NKAD, GKPNSGKS, DTAGI, and NKWD. The region spanning 402–486 is the KH-like domain; it reads RKVSTSELNK…PVRLEFRSDR (85 aa).

The protein belongs to the TRAFAC class TrmE-Era-EngA-EngB-Septin-like GTPase superfamily. EngA (Der) GTPase family. In terms of assembly, associates with the 50S ribosomal subunit.

Functionally, GTPase that plays an essential role in the late steps of ribosome biogenesis. In Leptospira borgpetersenii serovar Hardjo-bovis (strain L550), this protein is GTPase Der.